Consider the following 88-residue polypeptide: UPF0367 protein syc2447_c (88 aa).

This sequence belongs to the UPF0367 family.

This is UPF0367 protein syc2447_c from Synechococcus sp. (strain ATCC 27144 / PCC 6301 / SAUG 1402/1) (Anacystis nidulans).